A 172-amino-acid chain; its full sequence is Biogenesis of lysosome-related organelles complex 1 subunit 6 (172 aa).

Disordered stretches follow at residues 1–36 (MSVP…SPDE) and 135–172 (RALK…AKRT). Residues 125–167 (LHEKTSKLKKRALKLQQKRQKEELEREQQREKEFEREKQLTAK) adopt a coiled-coil conformation. Positions 143 to 164 (RQKEELEREQQREKEFEREKQL) are enriched in basic and acidic residues.

Belongs to the BLOC1S6 family. In terms of assembly, homodimer. Octamer composed of one copy each BLOC1S1, BLOC1S2, BLOC1S3, BLOC1S4, BLOC1S5, BLOC1S6, DTNBP1/BLOC1S7 and SNAPIN/BLOC1S8. The BLOC-1 complex associates with the AP-3 protein complex and membrane protein cargos. Interacts with BLOC1S4, BLOC1S5, DTNBP1/BLOC1S7, F-actin. Component of the biogenesis of lysosome-related organelles complex 1 (BLOC-1) composed of BLOC1S1, BLOC1S2, BLOC1S3, BLOC1S4, BLOC1S5, BLOC1S6, DTNBP1/BLOC1S7 and SNAPIN/BLOC1S8. Interacts with SNAP25, SNAP47 and STX12.

It is found in the cytoplasm. Its subcellular location is the membrane. Component of the BLOC-1 complex, a complex that is required for normal biogenesis of lysosome-related organelles (LRO), such as platelet dense granules and melanosomes. In concert with the AP-3 complex, the BLOC-1 complex is required to target membrane protein cargos into vesicles assembled at cell bodies for delivery into neurites and nerve terminals. The BLOC-1 complex, in association with SNARE proteins, is also proposed to be involved in neurite extension. May play a role in intracellular vesicle trafficking, particularly in the vesicle-docking and fusion process. This chain is Biogenesis of lysosome-related organelles complex 1 subunit 6 (BLOC1S6), found in Bos taurus (Bovine).